A 449-amino-acid chain; its full sequence is Xylose isomerase (449 aa).

Catalysis depends on residues H101 and D104. E232, E268, H271, D296, D307, D309, and D340 together coordinate Mg(2+).

This sequence belongs to the xylose isomerase family. Homotetramer. Mg(2+) serves as cofactor.

The protein localises to the cytoplasm. The catalysed reaction is alpha-D-xylose = alpha-D-xylulofuranose. The protein is Xylose isomerase of Bifidobacterium longum (strain DJO10A).